Reading from the N-terminus, the 377-residue chain is Phospho-N-acetylmuramoyl-pentapeptide-transferase (377 aa).

The next 11 membrane-spanning stretches (helical) occupy residues 9 to 29 (YITLRAVLACATALLIGLVAG), 59 to 79 (TPTMGGALILIAIAISTLLWA), 85 to 105 (FVWVVLLVTFGFGWIGWMDDY), 122 to 142 (FFWQATIGLVAAVYLAFAVSA), 155 to 175 (WVGSGFTMPLPTRADLIVPFF), 178 to 198 (VSYPLGVLGFVALTWAVIVGT), 210 to 230 (GLAIMPTVMVGSALGIFAYVV), 247 to 267 (AAELMVLCAAIGGAGLAFLWF), 274 to 294 (VFMGDVGALALGGALGTIAVI), 299 to 319 (IVLFIMGGVFVVETLSVMVQV), and 354 to 374 (QVVVRFWIITMMLVLVGLSTL).

It belongs to the glycosyltransferase 4 family. MraY subfamily. The cofactor is Mg(2+).

It is found in the cell inner membrane. The catalysed reaction is UDP-N-acetyl-alpha-D-muramoyl-L-alanyl-gamma-D-glutamyl-meso-2,6-diaminopimeloyl-D-alanyl-D-alanine + di-trans,octa-cis-undecaprenyl phosphate = di-trans,octa-cis-undecaprenyl diphospho-N-acetyl-alpha-D-muramoyl-L-alanyl-D-glutamyl-meso-2,6-diaminopimeloyl-D-alanyl-D-alanine + UMP. It participates in cell wall biogenesis; peptidoglycan biosynthesis. Its function is as follows. Catalyzes the initial step of the lipid cycle reactions in the biosynthesis of the cell wall peptidoglycan: transfers peptidoglycan precursor phospho-MurNAc-pentapeptide from UDP-MurNAc-pentapeptide onto the lipid carrier undecaprenyl phosphate, yielding undecaprenyl-pyrophosphoryl-MurNAc-pentapeptide, known as lipid I. In Bordetella bronchiseptica (strain ATCC BAA-588 / NCTC 13252 / RB50) (Alcaligenes bronchisepticus), this protein is Phospho-N-acetylmuramoyl-pentapeptide-transferase.